Here is a 447-residue protein sequence, read N- to C-terminus: Tetratricopeptide repeat protein 23 (447 aa).

TPR repeat units follow at residues 45-78, 137-170, 186-219, and 356-389; these read LHLC…TRIC, IELF…SKEL, ARIR…VEIS, and AETY…QTLL.

In terms of assembly, found Associated with the EvC complex composed of EFCAB7, IQCE, EVC2 and EVC.

The protein localises to the cell projection. The protein resides in the cilium. In terms of biological role, participates positively in the ciliary Hedgehog (Hh) signaling. This is Tetratricopeptide repeat protein 23 (TTC23) from Homo sapiens (Human).